The sequence spans 258 residues: 4-hydroxy-tetrahydrodipicolinate reductase (258 aa).

Residues 8–13 (GGSGKM), 86–88 (GTT), and 110–113 (ATNM) each bind NAD(+). The active-site Proton donor/acceptor is the histidine 142. Histidine 143 is a binding site for (S)-2,3,4,5-tetrahydrodipicolinate. Lysine 146 functions as the Proton donor in the catalytic mechanism. 152–153 (GT) serves as a coordination point for (S)-2,3,4,5-tetrahydrodipicolinate.

This sequence belongs to the DapB family.

It localises to the cytoplasm. The enzyme catalyses (S)-2,3,4,5-tetrahydrodipicolinate + NAD(+) + H2O = (2S,4S)-4-hydroxy-2,3,4,5-tetrahydrodipicolinate + NADH + H(+). The catalysed reaction is (S)-2,3,4,5-tetrahydrodipicolinate + NADP(+) + H2O = (2S,4S)-4-hydroxy-2,3,4,5-tetrahydrodipicolinate + NADPH + H(+). The protein operates within amino-acid biosynthesis; L-lysine biosynthesis via DAP pathway; (S)-tetrahydrodipicolinate from L-aspartate: step 4/4. Functionally, catalyzes the conversion of 4-hydroxy-tetrahydrodipicolinate (HTPA) to tetrahydrodipicolinate. The protein is 4-hydroxy-tetrahydrodipicolinate reductase of Campylobacter hominis (strain ATCC BAA-381 / DSM 21671 / CCUG 45161 / LMG 19568 / NCTC 13146 / CH001A).